Reading from the N-terminus, the 152-residue chain is Large ribosomal subunit protein uL15 (152 aa).

Positions 31–58 (GASCGFGMRGQKSRSGRPTRPGFEGGQM) are disordered.

This sequence belongs to the universal ribosomal protein uL15 family. In terms of assembly, part of the 50S ribosomal subunit.

Functionally, binds to the 23S rRNA. This is Large ribosomal subunit protein uL15 from Parasynechococcus marenigrum (strain WH8102).